Consider the following 303-residue polypeptide: Nitrogenase iron protein (303 aa).

Position 11–18 (11–18 (GKGGIGKS)) interacts with ATP. Position 112 (Cys112) interacts with [4Fe-4S] cluster. Arg115 is modified (ADP-ribosylarginine; by dinitrogenase reductase ADP-ribosyltransferase). Position 147 (Cys147) interacts with [4Fe-4S] cluster.

It belongs to the NifH/BchL/ChlL family. As to quaternary structure, homodimer. It depends on [4Fe-4S] cluster as a cofactor. In terms of processing, the reversible ADP-ribosylation of Arg-115 inactivates the nitrogenase reductase and regulates nitrogenase activity.

It carries out the reaction N2 + 8 reduced [2Fe-2S]-[ferredoxin] + 16 ATP + 16 H2O = H2 + 8 oxidized [2Fe-2S]-[ferredoxin] + 2 NH4(+) + 16 ADP + 16 phosphate + 6 H(+). Functionally, the key enzymatic reactions in nitrogen fixation are catalyzed by the nitrogenase complex, which has 2 components: the iron protein and the molybdenum-iron protein. The chain is Nitrogenase iron protein from Wolinella succinogenes (strain ATCC 29543 / DSM 1740 / CCUG 13145 / JCM 31913 / LMG 7466 / NCTC 11488 / FDC 602W) (Vibrio succinogenes).